Consider the following 176-residue polypeptide: Protein MAL2 (176 aa).

The Cytoplasmic portion of the chain corresponds to 1–34 (MSAGGAPVPPPPNPAMSFPAPRVTLPAGPDILRT). An MARVEL domain is found at 31-175 (ILRTYSGAFV…SLGLALRRWR (145 aa)). Residues 35–55 (YSGAFVCLEIVFGGLVWILVA) form a helical membrane-spanning segment. The Lumenal segment spans residues 56–66 (SSNVPLPLLQG). A helical membrane pass occupies residues 67-87 (WVMFVSVTAFVCSLLFLGVFL). Topologically, residues 88-102 (SGVVTQINANWNFLD) are cytoplasmic. A helical transmembrane segment spans residues 103-123 (FAYHFTVFVFYFGAFLLEAAT). Residues 124 to 149 (TSLHDLRCNRTMTVQPLLSDNQYNIN) are Lumenal-facing. N-linked (GlcNAc...) asparagine glycosylation occurs at Asn132. A helical membrane pass occupies residues 150 to 170 (VAATIFAFVTTACYGCSLGLA). Residues 171-176 (LRRWRP) lie on the Cytoplasmic side of the membrane.

Belongs to the MAL family. As to quaternary structure, interacts with TPD52L2.

The protein resides in the cell membrane. It is found in the apical cell membrane. In terms of biological role, member of the machinery of polarized transport. Required for the indirect transcytotic route at the step of the egress of the transcytosing cargo from perinuclear endosomes in order for it to travel to the apical surface via a raft-dependent pathway. In Bos taurus (Bovine), this protein is Protein MAL2 (MAL2).